The primary structure comprises 240 residues: tRNA (guanine-N(1)-)-methyltransferase (240 aa).

S-adenosyl-L-methionine is bound by residues Gly112 and 132-137; that span reads LGDFVL.

The protein belongs to the RNA methyltransferase TrmD family. Homodimer.

It localises to the cytoplasm. The enzyme catalyses guanosine(37) in tRNA + S-adenosyl-L-methionine = N(1)-methylguanosine(37) in tRNA + S-adenosyl-L-homocysteine + H(+). Its function is as follows. Specifically methylates guanosine-37 in various tRNAs. This is tRNA (guanine-N(1)-)-methyltransferase from Cyanothece sp. (strain PCC 7425 / ATCC 29141).